The primary structure comprises 235 residues: NAD-dependent protein deacylase (235 aa).

Residues 1 to 235 enclose the Deacetylase sirtuin-type domain; that stretch reads MDLRLFKNIV…VPRFITQFLE (235 aa). Position 14 to 33 (14 to 33) interacts with NAD(+); it reads GAGISAESGIRTFRDQDGLW. Residues tyrosine 58 and arginine 61 each coordinate substrate. 95 to 98 provides a ligand contact to NAD(+); it reads QNVD. Histidine 113 functions as the Proton acceptor in the catalytic mechanism. 4 residues coordinate Zn(2+): cysteine 121, cysteine 124, cysteine 140, and cysteine 143. NAD(+) is bound by residues 180 to 182, 204 to 206, and alanine 222; these read GTS and NLK.

It belongs to the sirtuin family. Class III subfamily. Zn(2+) is required as a cofactor.

Its subcellular location is the cytoplasm. It carries out the reaction N(6)-acetyl-L-lysyl-[protein] + NAD(+) + H2O = 2''-O-acetyl-ADP-D-ribose + nicotinamide + L-lysyl-[protein]. The catalysed reaction is N(6)-succinyl-L-lysyl-[protein] + NAD(+) + H2O = 2''-O-succinyl-ADP-D-ribose + nicotinamide + L-lysyl-[protein]. NAD-dependent lysine deacetylase and desuccinylase that specifically removes acetyl and succinyl groups on target proteins. Modulates the activities of several proteins which are inactive in their acylated form. The chain is NAD-dependent protein deacylase from Bdellovibrio bacteriovorus (strain ATCC 15356 / DSM 50701 / NCIMB 9529 / HD100).